The following is a 268-amino-acid chain: Phosphate import ATP-binding protein PstB 2 (268 aa).

Positions 19 to 263 (YKVRNMAFFY…PKDKRTEDYI (245 aa)) constitute an ABC transporter domain. 51-58 (GPSGCGKS) contributes to the ATP binding site.

This sequence belongs to the ABC transporter superfamily. Phosphate importer (TC 3.A.1.7) family. As to quaternary structure, the complex is composed of two ATP-binding proteins (PstB), two transmembrane proteins (PstC and PstA) and a solute-binding protein (PstS).

Its subcellular location is the cell inner membrane. It catalyses the reaction phosphate(out) + ATP + H2O = ADP + 2 phosphate(in) + H(+). Its function is as follows. Part of the ABC transporter complex PstSACB involved in phosphate import. Responsible for energy coupling to the transport system. The polypeptide is Phosphate import ATP-binding protein PstB 2 (Gloeobacter violaceus (strain ATCC 29082 / PCC 7421)).